A 209-amino-acid polypeptide reads, in one-letter code: Thymidylate kinase (209 aa).

10–17 (GLDGAGKS) contacts ATP.

Belongs to the thymidylate kinase family.

It carries out the reaction dTMP + ATP = dTDP + ADP. In terms of biological role, phosphorylation of dTMP to form dTDP in both de novo and salvage pathways of dTTP synthesis. This is Thymidylate kinase from Francisella tularensis subsp. tularensis (strain FSC 198).